The following is a 392-amino-acid chain: Imidazolonepropionase (392 aa).

Positions 70 and 72 each coordinate Fe(3+). H70 and H72 together coordinate Zn(2+). Residues R79, Y137, and H164 each coordinate 4-imidazolone-5-propanoate. Y137 serves as a coordination point for N-formimidoyl-L-glutamate. H227 contacts Fe(3+). H227 provides a ligand contact to Zn(2+). 4-imidazolone-5-propanoate is bound at residue Q230. D301 contributes to the Fe(3+) binding site. D301 provides a ligand contact to Zn(2+). The N-formimidoyl-L-glutamate site is built by N303 and G305. A 4-imidazolone-5-propanoate-binding site is contributed by T306.

Belongs to the metallo-dependent hydrolases superfamily. HutI family. Zn(2+) is required as a cofactor. Requires Fe(3+) as cofactor.

It is found in the cytoplasm. The catalysed reaction is 4-imidazolone-5-propanoate + H2O = N-formimidoyl-L-glutamate. It participates in amino-acid degradation; L-histidine degradation into L-glutamate; N-formimidoyl-L-glutamate from L-histidine: step 3/3. In terms of biological role, catalyzes the hydrolytic cleavage of the carbon-nitrogen bond in imidazolone-5-propanoate to yield N-formimidoyl-L-glutamate. It is the third step in the universal histidine degradation pathway. The polypeptide is Imidazolonepropionase (Nocardia farcinica (strain IFM 10152)).